The following is an 833-amino-acid chain: Leucine--tRNA ligase (833 aa).

Positions 41–52 match the 'HIGH' region motif; the sequence is PYPSGAGLHVGH. A 'KMSKS' region motif is present at residues 610-614; the sequence is KMSKS. ATP is bound at residue lysine 613.

It belongs to the class-I aminoacyl-tRNA synthetase family.

It is found in the cytoplasm. The catalysed reaction is tRNA(Leu) + L-leucine + ATP = L-leucyl-tRNA(Leu) + AMP + diphosphate. The sequence is that of Leucine--tRNA ligase from Streptococcus pneumoniae serotype 4 (strain ATCC BAA-334 / TIGR4).